The primary structure comprises 130 residues: Large ribosomal subunit protein bL12 (130 aa).

The protein belongs to the bacterial ribosomal protein bL12 family. Homodimer. Part of the ribosomal stalk of the 50S ribosomal subunit. Forms a multimeric L10(L12)X complex, where L10 forms an elongated spine to which 2 to 4 L12 dimers bind in a sequential fashion. Binds GTP-bound translation factors.

Forms part of the ribosomal stalk which helps the ribosome interact with GTP-bound translation factors. Is thus essential for accurate translation. This is Large ribosomal subunit protein bL12 from Synechococcus sp. (strain WH7803).